The chain runs to 176 residues: ATP-dependent protease subunit HslV (176 aa).

Threonine 6 is a catalytic residue. The Na(+) site is built by serine 161, cysteine 164, and threonine 167.

Belongs to the peptidase T1B family. HslV subfamily. As to quaternary structure, a double ring-shaped homohexamer of HslV is capped on each side by a ring-shaped HslU homohexamer. The assembly of the HslU/HslV complex is dependent on binding of ATP.

The protein resides in the cytoplasm. It catalyses the reaction ATP-dependent cleavage of peptide bonds with broad specificity.. With respect to regulation, allosterically activated by HslU binding. Its function is as follows. Protease subunit of a proteasome-like degradation complex believed to be a general protein degrading machinery. The sequence is that of ATP-dependent protease subunit HslV from Thermosipho africanus (strain TCF52B).